The chain runs to 294 residues: GTPase Era (294 aa).

One can recognise an Era-type G domain in the interval 3–170; that stretch reads KSGFISIIGR…LELMIKYMPE (168 aa). The G1 stretch occupies residues 11-18; that stretch reads GRPNVGKS. GTP is bound at residue 11 to 18; that stretch reads GRPNVGKS. Residues 37–41 are G2; sequence QTTRN. The tract at residues 58–61 is G3; the sequence is DTPG. Residues 58–62 and 120–123 each bind GTP; these read DTPGI and NKID. The tract at residues 120-123 is G4; it reads NKID. A G5 region spans residues 149–151; that stretch reads ISA. In terms of domain architecture, KH type-2 spans 201-278; it reads LSEEVPHGIA…NLKVWVKVKK (78 aa).

It belongs to the TRAFAC class TrmE-Era-EngA-EngB-Septin-like GTPase superfamily. Era GTPase family. Monomer.

The protein resides in the cytoplasm. The protein localises to the cell membrane. An essential GTPase that binds both GDP and GTP, with rapid nucleotide exchange. Plays a role in 16S rRNA processing and 30S ribosomal subunit biogenesis and possibly also in cell cycle regulation and energy metabolism. The polypeptide is GTPase Era (Clostridium novyi (strain NT)).